Here is a 553-residue protein sequence, read N- to C-terminus: uncharacterized protein (553 aa).

A run of 2 helical transmembrane segments spans residues 6 to 26 and 524 to 544; these read IKIFLISLIFISGVYALQVDA and SYWILGIIVVIAIVLVVGYVF.

The protein to M.jannaschii MJ0795 and MJ1506.

Its subcellular location is the cell membrane. This is an uncharacterized protein from Methanocaldococcus jannaschii (strain ATCC 43067 / DSM 2661 / JAL-1 / JCM 10045 / NBRC 100440) (Methanococcus jannaschii).